A 126-amino-acid polypeptide reads, in one-letter code: Aspartate 1-decarboxylase (126 aa).

The active-site Schiff-base intermediate with substrate; via pyruvic acid is the S25. A Pyruvic acid (Ser) modification is found at S25. T57 contacts substrate. Catalysis depends on Y58, which acts as the Proton donor. Residue 73-75 participates in substrate binding; sequence GAA.

This sequence belongs to the PanD family. As to quaternary structure, heterooctamer of four alpha and four beta subunits. Requires pyruvate as cofactor. Is synthesized initially as an inactive proenzyme, which is activated by self-cleavage at a specific serine bond to produce a beta-subunit with a hydroxyl group at its C-terminus and an alpha-subunit with a pyruvoyl group at its N-terminus.

The protein resides in the cytoplasm. The catalysed reaction is L-aspartate + H(+) = beta-alanine + CO2. It functions in the pathway cofactor biosynthesis; (R)-pantothenate biosynthesis; beta-alanine from L-aspartate: step 1/1. Catalyzes the pyruvoyl-dependent decarboxylation of aspartate to produce beta-alanine. The chain is Aspartate 1-decarboxylase from Pectobacterium carotovorum subsp. carotovorum (strain PC1).